Reading from the N-terminus, the 348-residue chain is Mitochondrial glycine transporter (348 aa).

Solcar repeat units follow at residues 10–94 (TKST…IREN), 130–214 (LSNT…SKQH), and 249–333 (RAAS…LIRR). 6 helical membrane-spanning segments follow: residues 16-41 (FVAG…TRVQ), 69-95 (GTLP…RENA), 136-161 (LLAG…VRYE), 189-212 (GFGA…EKSK), 253-279 (INFA…KTRI), and 308-326 (GLAL…AWTV).

This sequence belongs to the mitochondrial carrier (TC 2.A.29) family. SLC25A38 subfamily.

It is found in the mitochondrion inner membrane. It carries out the reaction glycine(in) = glycine(out). Its function is as follows. Mitochondrial glycine transporter that imports glycine into the mitochondrial matrix. Plays an important role in providing glycine for the first enzymatic step in heme biosynthesis, the condensation of glycine with succinyl-CoA to produce 5-aminolevulinate (ALA) in the mitochondrial matrix. This Neurospora crassa (strain ATCC 24698 / 74-OR23-1A / CBS 708.71 / DSM 1257 / FGSC 987) protein is Mitochondrial glycine transporter (mic-13).